Reading from the N-terminus, the 309-residue chain is Homoserine O-acetyltransferase (309 aa).

Catalysis depends on C142, which acts as the Acyl-thioester intermediate. K163 and S192 together coordinate substrate. The active-site Proton acceptor is the H235. E237 is a catalytic residue. Residue R249 coordinates substrate.

This sequence belongs to the MetA family.

Its subcellular location is the cytoplasm. It catalyses the reaction L-homoserine + acetyl-CoA = O-acetyl-L-homoserine + CoA. The protein operates within amino-acid biosynthesis; L-methionine biosynthesis via de novo pathway; O-acetyl-L-homoserine from L-homoserine: step 1/1. Transfers an acetyl group from acetyl-CoA to L-homoserine, forming acetyl-L-homoserine. The sequence is that of Homoserine O-acetyltransferase from Petrotoga mobilis (strain DSM 10674 / SJ95).